The primary structure comprises 151 residues: MIIEKINNNVCNMDDFSNTKKHLDKILISSELLLKRVQKLYSESGFEIGVSLGSGETLKNGDILYEDENRIVYIEVLPEEVIVITPTSIKEMGIIAHNLGNRHLPAQFDEGCMILANDYLVEDLLKKEGVPYQKENRVLPKPFKHASHKHI.

It belongs to the UreE family.

The protein resides in the cytoplasm. Involved in urease metallocenter assembly. Binds nickel. Probably functions as a nickel donor during metallocenter assembly. In Bacillus cereus (strain ATCC 10987 / NRS 248), this protein is Urease accessory protein UreE.